A 649-amino-acid polypeptide reads, in one-letter code: DNA mismatch repair protein MutL (649 aa).

The protein belongs to the DNA mismatch repair MutL/HexB family.

Functionally, this protein is involved in the repair of mismatches in DNA. It is required for dam-dependent methyl-directed DNA mismatch repair. May act as a 'molecular matchmaker', a protein that promotes the formation of a stable complex between two or more DNA-binding proteins in an ATP-dependent manner without itself being part of a final effector complex. This chain is DNA mismatch repair protein MutL, found in Streptococcus pneumoniae (strain JJA).